The following is a 437-amino-acid chain: Vacuolar protein sorting-associated protein 4A (437 aa).

Positions 2–80 (TTSTLQKAID…KDYLRNKEKH (79 aa)) constitute an MIT domain. Position 8 is an N6-acetyllysine (Lys-8). Residues 15 to 37 (KATEEDKAKNYEEALRLYQHAVE) adopt a coiled-coil conformation. Residues 75–106 (RNKEKHGKKPVKENQSEGKGSDSDSEGDNPEK) form a disordered region. Positions 84–96 (PVKENQSEGKGSD) are enriched in basic and acidic residues. A phosphoserine mark is found at Ser-95 and Ser-97. 167–174 (GPPGTGKS) lines the ATP pocket.

Belongs to the AAA ATPase family. As to quaternary structure, proposed to be monomeric or homodimeric in nucleotide-free form and to oligomerize upon binding to ATP to form two stacked hexameric or heptameric rings with a central pore through which ESCRT-III substrates are translocated in an ATP-dependent manner. Interacts with CHMP1A, CHMP1B, CHMP2A, CHMP2B, CHMP3, CHMP4A, CHMP4B, CHMP4C and CHMP6. Interacts with VPS4B; the interaction suggests a heteromeric assembly with VPS4B. Interacts with SPAST. Interacts with IST1. Interacts with ZFYVE19/ANCHR; leading to retain it at midbody. As to expression, highly expressed in testis and moderately in heart and brain. Not detected in spleen, lung, liver, skeletal muscle or kidney.

The protein resides in the late endosome membrane. The protein localises to the midbody. It is found in the cytoplasm. It localises to the cytoskeleton. Its subcellular location is the spindle. It carries out the reaction ATP + H2O = ADP + phosphate + H(+). In terms of biological role, involved in late steps of the endosomal multivesicular bodies (MVB) pathway. Recognizes membrane-associated ESCRT-III assemblies and catalyzes their disassembly, possibly in combination with membrane fission. Redistributes the ESCRT-III components to the cytoplasm for further rounds of MVB sorting. MVBs contain intraluminal vesicles (ILVs) that are generated by invagination and scission from the limiting membrane of the endosome and mostly are delivered to lysosomes enabling degradation of membrane proteins, such as stimulated growth factor receptors, lysosomal enzymes and lipids. It is required for proper accomplishment of various processes including the regulation of endosome size, primary cilium organization, mitotic spindle organization and chromosome segregation, and nuclear envelope sealing and spindle disassembly during anaphase. In conjunction with the ESCRT machinery also appears to function in topologically equivalent membrane fission events, such as the terminal stages of cytokinesis. Involved in cytokinesis: retained at the midbody by ZFYVE19/ANCHR and CHMP4C until abscission checkpoint signaling is terminated at late cytokinesis. It is then released following dephosphorylation of CHMP4C, leading to abscission. VPS4A/B are required for the exosomal release of SDCBP, CD63 and syndecan. Critical for normal erythroblast cytokinesis and correct erythropoiesis. This chain is Vacuolar protein sorting-associated protein 4A, found in Mus musculus (Mouse).